The primary structure comprises 79 residues: Putative defensin-like protein 203 (79 aa).

The first 27 residues, 1–27 (MAKLIVNFSALLMIILLVSNGLPKAVA), serve as a signal peptide directing secretion. 4 disulfide bridges follow: C30–C79, C40–C64, C49–C73, and C53–C75.

It belongs to the DEFL family.

It localises to the secreted. This chain is Putative defensin-like protein 203, found in Arabidopsis thaliana (Mouse-ear cress).